The chain runs to 339 residues: Ketol-acid reductoisomerase (NADP(+)) (339 aa).

One can recognise a KARI N-terminal Rossmann domain in the interval 1–182 (MRVYYDRDAD…GGGRSGVIET (182 aa)). NADP(+) is bound by residues 24–27 (YGSQ), arginine 48, serine 51, threonine 53, and 83–86 (DELQ). Histidine 108 is an active-site residue. Residue glycine 134 coordinates NADP(+). In terms of domain architecture, KARI C-terminal knotted spans 183-328 (NFREECETDL…GRLRAMMPWI (146 aa)). Residues aspartate 191, glutamate 195, glutamate 227, and glutamate 231 each contribute to the Mg(2+) site. Serine 252 is a substrate binding site.

Belongs to the ketol-acid reductoisomerase family. Requires Mg(2+) as cofactor.

The catalysed reaction is (2R)-2,3-dihydroxy-3-methylbutanoate + NADP(+) = (2S)-2-acetolactate + NADPH + H(+). The enzyme catalyses (2R,3R)-2,3-dihydroxy-3-methylpentanoate + NADP(+) = (S)-2-ethyl-2-hydroxy-3-oxobutanoate + NADPH + H(+). The protein operates within amino-acid biosynthesis; L-isoleucine biosynthesis; L-isoleucine from 2-oxobutanoate: step 2/4. It functions in the pathway amino-acid biosynthesis; L-valine biosynthesis; L-valine from pyruvate: step 2/4. Functionally, involved in the biosynthesis of branched-chain amino acids (BCAA). Catalyzes an alkyl-migration followed by a ketol-acid reduction of (S)-2-acetolactate (S2AL) to yield (R)-2,3-dihydroxy-isovalerate. In the isomerase reaction, S2AL is rearranged via a Mg-dependent methyl migration to produce 3-hydroxy-3-methyl-2-ketobutyrate (HMKB). In the reductase reaction, this 2-ketoacid undergoes a metal-dependent reduction by NADPH to yield (R)-2,3-dihydroxy-isovalerate. The protein is Ketol-acid reductoisomerase (NADP(+)) of Phenylobacterium zucineum (strain HLK1).